A 227-amino-acid polypeptide reads, in one-letter code: NAD(P)H-quinone oxidoreductase subunit K, chloroplastic (227 aa).

The [4Fe-4S] cluster site is built by Cys-43, Cys-44, Cys-108, and Cys-139.

It belongs to the complex I 20 kDa subunit family. As to quaternary structure, NDH is composed of at least 16 different subunits, 5 of which are encoded in the nucleus. It depends on [4Fe-4S] cluster as a cofactor.

It is found in the plastid. The protein resides in the chloroplast thylakoid membrane. The catalysed reaction is a plastoquinone + NADH + (n+1) H(+)(in) = a plastoquinol + NAD(+) + n H(+)(out). The enzyme catalyses a plastoquinone + NADPH + (n+1) H(+)(in) = a plastoquinol + NADP(+) + n H(+)(out). Functionally, NDH shuttles electrons from NAD(P)H:plastoquinone, via FMN and iron-sulfur (Fe-S) centers, to quinones in the photosynthetic chain and possibly in a chloroplast respiratory chain. The immediate electron acceptor for the enzyme in this species is believed to be plastoquinone. Couples the redox reaction to proton translocation, and thus conserves the redox energy in a proton gradient. The protein is NAD(P)H-quinone oxidoreductase subunit K, chloroplastic of Citrus sinensis (Sweet orange).